We begin with the raw amino-acid sequence, 485 residues long: Glutamate--tRNA ligase (485 aa).

The 'HIGH' region motif lies at 11-21 (PSPTGHLHIGN). Positions 252 to 256 (KLSKR) match the 'KMSKS' region motif. K255 lines the ATP pocket.

It belongs to the class-I aminoacyl-tRNA synthetase family. Glutamate--tRNA ligase type 1 subfamily. As to quaternary structure, monomer.

The protein resides in the cytoplasm. It catalyses the reaction tRNA(Glu) + L-glutamate + ATP = L-glutamyl-tRNA(Glu) + AMP + diphosphate. Catalyzes the attachment of glutamate to tRNA(Glu) in a two-step reaction: glutamate is first activated by ATP to form Glu-AMP and then transferred to the acceptor end of tRNA(Glu). This chain is Glutamate--tRNA ligase, found in Bacillus licheniformis (strain ATCC 14580 / DSM 13 / JCM 2505 / CCUG 7422 / NBRC 12200 / NCIMB 9375 / NCTC 10341 / NRRL NRS-1264 / Gibson 46).